A 354-amino-acid polypeptide reads, in one-letter code: Selenide, water dikinase (354 aa).

The active site involves Cys-23. Residues Lys-26 and 54–56 (TSD) each bind ATP. Asp-57 serves as a coordination point for Mg(2+). Residues Asp-74, Asp-97, and 145 to 147 (GHS) each bind ATP. Asp-97 lines the Mg(2+) pocket. Residue Asp-233 coordinates Mg(2+).

This sequence belongs to the selenophosphate synthase 1 family. Class I subfamily. Homodimer. Mg(2+) is required as a cofactor.

It catalyses the reaction hydrogenselenide + ATP + H2O = selenophosphate + AMP + phosphate + 2 H(+). Its function is as follows. Synthesizes selenophosphate from selenide and ATP. The protein is Selenide, water dikinase of Burkholderia ambifaria (strain MC40-6).